The primary structure comprises 384 residues: Probable inactive linolenate hydroperoxide lyase (384 aa).

Residue cysteine 346 coordinates heme.

The protein belongs to the cytochrome P450 family. Requires heme as cofactor. In terms of tissue distribution, expressed in roots, leaves, flowers and siliques.

The polypeptide is Probable inactive linolenate hydroperoxide lyase (Arabidopsis thaliana (Mouse-ear cress)).